Consider the following 183-residue polypeptide: Oleosin Bn-V (183 aa).

The polar stretch occupies residues 1–47 (PARTHHDITTRDQYPLISRDRDQYGMIGRDQYNMSGQNYSKSRQIAK). Repeats lie at residues 11 to 20 (RDQYPLISRD) and 21 to 30 (RDQYGMIGRD). The tract at residues 48 to 119 (ATTAVTAGDS…AAITVFSWIY (72 aa)) is hydrophobic. The next 2 membrane-spanning stretches (helical) occupy residues 57–77 (SLLV…IVAT) and 99–119 (TGFL…SWIY). The interval 154 to 183 (YGQQHTGEEHDRDRDHRTDRDRTRGTQHTT) is disordered. Over residues 159–177 (TGEEHDRDRDHRTDRDRTR) the composition is skewed to basic and acidic residues.

This sequence belongs to the oleosin family.

It localises to the lipid droplet. It is found in the membrane. Its function is as follows. May have a structural role to stabilize the lipid body during desiccation of the seed by preventing coalescence of the oil. Probably interacts with both lipid and phospholipid moieties of lipid bodies. May also provide recognition signals for specific lipase anchorage in lipolysis during seedling growth. This Brassica napus (Rape) protein is Oleosin Bn-V.